The chain runs to 516 residues: Arabinose import ATP-binding protein AraG (516 aa).

ABC transporter domains follow at residues 5–240 (LRFD…MVGR) and 240–497 (REIS…LPQS). An ATP-binding site is contributed by 37–44 (GENGAGKS).

Belongs to the ABC transporter superfamily. Arabinose importer (TC 3.A.1.2.2) family. The complex is composed of two ATP-binding proteins (AraG), two transmembrane proteins (AraH) and a solute-binding protein (AraF).

The protein localises to the cell inner membrane. It catalyses the reaction L-arabinose(out) + ATP + H2O = L-arabinose(in) + ADP + phosphate + H(+). Functionally, part of the ABC transporter complex AraFGH involved in arabinose import. Responsible for energy coupling to the transport system. This Paraburkholderia xenovorans (strain LB400) protein is Arabinose import ATP-binding protein AraG.